The sequence spans 67 residues: Small ribosomal subunit protein bS21 (67 aa).

This sequence belongs to the bacterial ribosomal protein bS21 family.

The protein is Small ribosomal subunit protein bS21 of Nitratidesulfovibrio vulgaris (strain DP4) (Desulfovibrio vulgaris).